Here is a 368-residue protein sequence, read N- to C-terminus: MANSTGLNASEVAGSLGLILAAVVEVGALLGNGALLVVVLRTPGLRDALYLAHLCVVDLLAAASIMPLGLLAAPPPGLGRVRLGPAPCRAARFLSAALLPACTLGVAALGLARYRLIVHPLRPGSRPPPVLVLTAVWAAAGLLGALSLLGTPPAPPPAPARCSVLAGGLGPFRPLWALLAFALPALLLLGAYGGIFVVARRAALRPPRPARGSRLHSDSLDSRLSILPPLRPRLPGGKAALAPALAVGQFAACWLPYGCACLAPAARAAEAEAAVTWVAYSAFAAHPFLYGLLQRPVRLALGRLSRRALPGPVRACTPQAWHPRALLQCLQRPPEGPAVGPSEAPEQTPELAGGRSPAYQGPPESSLS.

Over 1–18 (MANSTGLNASEVAGSLGL) the chain is Extracellular. Residues Asn-3 and Asn-8 are each glycosylated (N-linked (GlcNAc...) asparagine). A helical transmembrane segment spans residues 19–39 (ILAAVVEVGALLGNGALLVVV). Residues 40 to 53 (LRTPGLRDALYLAH) are Cytoplasmic-facing. A helical transmembrane segment spans residues 54 to 74 (LCVVDLLAAASIMPLGLLAAP). Residues 75–91 (PPGLGRVRLGPAPCRAA) are Extracellular-facing. A helical membrane pass occupies residues 92 to 112 (RFLSAALLPACTLGVAALGLA). The Cytoplasmic segment spans residues 113–129 (RYRLIVHPLRPGSRPPP). The helical transmembrane segment at 130–150 (VLVLTAVWAAAGLLGALSLLG) threads the bilayer. Residues 151-177 (TPPAPPPAPARCSVLAGGLGPFRPLWA) are Extracellular-facing. The helical transmembrane segment at 178–198 (LLAFALPALLLLGAYGGIFVV) threads the bilayer. Topologically, residues 199 to 239 (ARRAALRPPRPARGSRLHSDSLDSRLSILPPLRPRLPGGKA) are cytoplasmic. A helical transmembrane segment spans residues 240–260 (ALAPALAVGQFAACWLPYGCA). Residues 261-272 (CLAPAARAAEAE) are Extracellular-facing. The helical transmembrane segment at 273–293 (AAVTWVAYSAFAAHPFLYGLL) threads the bilayer. The Cytoplasmic segment spans residues 294–368 (QRPVRLALGR…YQGPPESSLS (75 aa)). A disordered region spans residues 332–368 (RPPEGPAVGPSEAPEQTPELAGGRSPAYQGPPESSLS).

The protein belongs to the G-protein coupled receptor 1 family. As to quaternary structure, homodimers. Forms heterodimer with MTNR1B. Interacts with ARRB1 and ARRB2 in a spontaneous and agonist-independent manner; leading to the internalization of GPR62 in the endosomal compartment. In terms of tissue distribution, expressed in brain; detected in the basal forebrain, frontal cortex, caudate, putamen, thalamus and hippocampus.

Its subcellular location is the cell membrane. It is found in the endosome membrane. Orphan G-protein coupled receptor. Constitutively activates the G(q/11)/inositol phosphate and the G(s)-alpha/cAMP signaling pathways. Has spontaneous activity for beta-arrestin recruitment. Shows a reciprocal modulation of signaling functions with the melatonin receptor MTNR1B most likely through receptor heteromerization. This chain is G-protein coupled receptor 62 (GPR62), found in Homo sapiens (Human).